The following is a 326-amino-acid chain: Ribosomal RNA small subunit methyltransferase H (326 aa).

S-adenosyl-L-methionine contacts are provided by residues Gly45 to His47, Asp65, Asp113, and Gln120. The disordered stretch occupies residues Pro299–Arg326. The segment covering Arg316 to Arg326 has biased composition (basic and acidic residues).

Belongs to the methyltransferase superfamily. RsmH family.

The protein resides in the cytoplasm. It catalyses the reaction cytidine(1402) in 16S rRNA + S-adenosyl-L-methionine = N(4)-methylcytidine(1402) in 16S rRNA + S-adenosyl-L-homocysteine + H(+). Specifically methylates the N4 position of cytidine in position 1402 (C1402) of 16S rRNA. The protein is Ribosomal RNA small subunit methyltransferase H of Thermomicrobium roseum (strain ATCC 27502 / DSM 5159 / P-2).